The primary structure comprises 237 residues: Demethylmenaquinone methyltransferase (237 aa).

Residues Thr58, Asp79, and 106–107 each bind S-adenosyl-L-methionine; that span reads NA.

The protein belongs to the class I-like SAM-binding methyltransferase superfamily. MenG/UbiE family.

It carries out the reaction a 2-demethylmenaquinol + S-adenosyl-L-methionine = a menaquinol + S-adenosyl-L-homocysteine + H(+). It functions in the pathway quinol/quinone metabolism; menaquinone biosynthesis; menaquinol from 1,4-dihydroxy-2-naphthoate: step 2/2. Its function is as follows. Methyltransferase required for the conversion of demethylmenaquinol (DMKH2) to menaquinol (MKH2). The sequence is that of Demethylmenaquinone methyltransferase from Bacillus cereus (strain ATCC 10987 / NRS 248).